Reading from the N-terminus, the 243-residue chain is tRNA pseudouridine synthase A (243 aa).

The active-site Nucleophile is Asp-53. Tyr-111 is a binding site for substrate.

Belongs to the tRNA pseudouridine synthase TruA family. As to quaternary structure, homodimer.

The enzyme catalyses uridine(38/39/40) in tRNA = pseudouridine(38/39/40) in tRNA. In terms of biological role, formation of pseudouridine at positions 38, 39 and 40 in the anticodon stem and loop of transfer RNAs. This Chlorobium limicola (strain DSM 245 / NBRC 103803 / 6330) protein is tRNA pseudouridine synthase A.